Consider the following 1197-residue polypeptide: Pleckstrin homology domain-containing family A member 7 (1197 aa).

2 consecutive WW domains span residues 8–41 (DTLPDNGSYGVCRDGRVFFIDDEARATTWLHPRT) and 53–86 (SDLPSGWEEGFTKEGASFFIDHNQRTTTFIHPVT). Residues 98 to 148 (LQDQPGGRMLKQPSSTISEASTTVTTSTVDSTSGSKGSRSSGRVHSFGKRD) form a disordered region. Residues 111-140 (SSTISEASTTVTTSTVDSTSGSKGSRSSGR) are compositionally biased toward low complexity. In terms of domain architecture, PH spans 158–257 (PVVVRGWLYK…WVRAMNQAAL (100 aa)). 3 disordered regions span residues 348–384 (PGSTPPSRVASRAPSRAVSTPPVVQRNGTPIEQNGMP), 423–467 (LVST…QLPS), and 508–577 (FRHG…TVRP). Low complexity predominate over residues 528-546 (VSSTRNNSDVSRSVSVPPT). Over residues 568-577 (TPAERVTVRP) the composition is skewed to basic and acidic residues. Residues 678 to 799 (DKILQELEFR…RIEDVMTGLS (122 aa)) adopt a coiled-coil conformation. Disordered regions lie at residues 830 to 928 (SRCM…SYSN) and 1032 to 1064 (HQRALVRERKRNLSQGERHHSRASTRPVNSDPG). Over residues 913–924 (RQSDERKRDRES) the composition is skewed to basic and acidic residues. A coiled-coil region spans residues 1016-1044 (QRVRMSVEEQLERMKRHQRALVRERKRNL). Over residues 1032–1043 (HQRALVRERKRN) the composition is skewed to basic residues.

Its subcellular location is the cell junction. It is found in the adherens junction. The protein resides in the cytoplasm. It localises to the cytoskeleton. The protein localises to the microtubule organizing center. Its subcellular location is the centrosome. Its function is as follows. Required for zonula adherens biogenesis and maintenance. The sequence is that of Pleckstrin homology domain-containing family A member 7 (plekha7) from Danio rerio (Zebrafish).